The chain runs to 260 residues: uncharacterized protein (260 aa).

Positions isoleucine 214–glutamate 252 form a coiled coil.

This is an uncharacterized protein from Bacillus subtilis (strain 168).